A 104-amino-acid polypeptide reads, in one-letter code: Phosphoribosyl-ATP pyrophosphatase (104 aa).

The protein belongs to the PRA-PH family.

The protein resides in the cytoplasm. The enzyme catalyses 1-(5-phospho-beta-D-ribosyl)-ATP + H2O = 1-(5-phospho-beta-D-ribosyl)-5'-AMP + diphosphate + H(+). Its pathway is amino-acid biosynthesis; L-histidine biosynthesis; L-histidine from 5-phospho-alpha-D-ribose 1-diphosphate: step 2/9. This is Phosphoribosyl-ATP pyrophosphatase (hisE) from Methanosarcina acetivorans (strain ATCC 35395 / DSM 2834 / JCM 12185 / C2A).